The chain runs to 2070 residues: Multiple PDZ domain protein (2070 aa).

In terms of domain architecture, L27 spans 1–63 (MLEAIDKNRA…SVQQLKDQVN (63 aa)). Residues 137 to 224 (VFELLKPPSG…TVQLVIARGS (88 aa)) form the PDZ 1 domain. Ser230 carries the post-translational modification Phosphoserine. 2 consecutive PDZ domains span residues 257-337 (TIEL…ARGA) and 377-463 (DVEL…MRRG). Residue Ser483 is modified to Phosphoserine. 2 consecutive PDZ domains span residues 553 to 634 (VAHV…CRRT) and 700 to 786 (HIEL…VAKP). 2 positions are modified to phosphoserine: Ser790 and Ser1078. Residues 1008-1089 (TINIAKGNSS…IGPDIKITYV (82 aa)) form the PDZ 6 domain. The interval 1121–1140 (DIPELPEREEGEGEESELQN) is disordered. The 93-residue stretch at 1151-1243 (RVELWREPSK…PVVFMVQSII (93 aa)) folds into the PDZ 7 domain. An Omega-N-methylarginine modification is found at Arg1170. The interval 1278 to 1324 (ADKAPSQSESEPEKAPLCSVPPPPPSAFAEMGSDHTQSSASKISQDV) is disordered. The segment covering 1311 to 1321 (DHTQSSASKIS) has biased composition (polar residues). PDZ domains lie at 1350-1433 (MIEL…IRNK) and 1483-1564 (HLEL…HAEN). The disordered stretch occupies residues 1567–1612 (SQAVPSAAGAASGEKKNSSQSLMVPQSGSPEPESIRNTSRSSTPAI). Polar residues predominate over residues 1584–1610 (SSQSLMVPQSGSPEPESIRNTSRSSTP). 2 consecutive PDZ domains span residues 1629-1712 (TIEI…YRDE) and 1725-1807 (TIEL…GRIK). A phosphoserine mark is found at Ser1818 and Ser1824. 2 consecutive PDZ domains span residues 1862 to 1948 (TVEM…VAGG) and 1987 to 2070 (SITL…MVLS).

Interacts with CLDN5, DLG4, GRIN1, F11R/JAM, CLDN1, NG2, CRB1, MPP4 and PALS1. Interacts with HTR2A, HTR2B, HTR2C, PLEKHA1/TAPP1, PLEKHA2/TAPP2, CXADR, SYNGAP1, CAMK2A and CAMK2B. Interacts with FAT4 (via cytoplasmic domain). Interacts with DLL1. In terms of assembly, (Microbial infection) Interacts with human adenovirus type 9 E4-ORF1 protein. As to quaternary structure, (Microbial infection) Interacts with human papillomavirus 18/HPV18 protein E6. Expressed in heart, brain, placenta, liver, skeletal muscle, kidney and pancreas.

The protein localises to the cell membrane. It localises to the apical cell membrane. Its subcellular location is the postsynaptic density. It is found in the cell projection. The protein resides in the dendrite. The protein localises to the cell junction. It localises to the tight junction. Its subcellular location is the synapse. It is found in the synaptosome. In terms of biological role, member of the NMDAR signaling complex that may play a role in control of AMPAR potentiation and synaptic plasticity in excitatory synapses. Promotes clustering of HT2RC at the cell surface. The sequence is that of Multiple PDZ domain protein (MPDZ) from Homo sapiens (Human).